The chain runs to 111 residues: UPF0145 protein BRADO6695 (111 aa).

Belongs to the UPF0145 family.

In Bradyrhizobium sp. (strain ORS 278), this protein is UPF0145 protein BRADO6695.